The chain runs to 34 residues: DCLGFMRKCIPDNDKCCRPNLVCSRTHKWCKYVF.

3 disulfides stabilise this stretch: C2–C17, C9–C23, and C16–C30. Residue F34 is modified to Phenylalanine amide.

The protein belongs to the neurotoxin 10 (Hwtx-1) family. 08 (Gtx1-15) subfamily. Expressed by the venom gland.

Its subcellular location is the secreted. Functionally, potent voltage-gated sodium channel blocker. Potently inhibits the voltage-gated sodium channels Nav1.7/SCN9A (IC(50)=0.58-10 nM). Also shows a moderate activity on Nav1.1/SCN1A (IC(50)=6 nM), Nav1.2/SCN2A (IC(50)=5-128 nM), Nav1.3/SCN3A (IC(50)=20.3-170 nM), and Nav1.6/SCN8A (IC(50)=17-20.1 nM). Shows an unclear inhibition of Nav1.4/SCN4A (IC(50)=200 nM to &gt;10 uM), Nav1.5/SCN5A (IC(50)=140 nM to &gt;10 uM) and Nav1.8/SCN10A (IC(50)=68-12200 nM). Weakly blocks the low voltage-gated calcium channels Cav3.1/CACNA1G (30% inhibition of the peak current at 9.8 nM). shows moderate affinity for lipid bilayers. In vivo, when tested on the OD1-induced mouse model of Nav1.7/SCN9A-mediated pain, the toxin is effective when co-administered with OD1, but lacks efficacy when delivered systemically. This chain is Toxin GTx1-15, found in Grammostola porteri (Tarantula spider).